The following is a 1558-amino-acid chain: ABC transporter NFT1 (1558 aa).

Residues 1-29 (MIKNGTCPFWERDDLSECARREYIEFKFP) lie on the Extracellular side of the membrane. An N-linked (GlcNAc...) asparagine glycan is attached at Asn-4. The helical transmembrane segment at 30–50 (LFILLTGMIYAFCKVFRAFYL) threads the bilayer. The Cytoplasmic portion of the chain corresponds to 51 to 103 (RRKNHTNEAPEFEEQGNGNHEYARFSVLRLKSAWESRSFCNVNNRSTFDKFKK). The chain crosses the membrane as a helical span at residues 104-124 (FIEGAFIVLQLTIHLYILSNM). The Extracellular segment spans residues 125 to 130 (PMDNKK). The chain crosses the membrane as a helical span at residues 131-151 (FFHQGFLVQMFLWILLLVVIT). At 152–169 (LRLISASQSFRWVLACKR) the chain is on the cytoplasmic side. A helical membrane pass occupies residues 170–190 (DLWAVSFYSYASLFTLSILPL). The Extracellular portion of the chain corresponds to 191 to 201 (RSVFIGKIKDK). Residues 202–222 (IMVKYIISETFIDLALLLLLS) form a helical membrane-spanning segment. Topologically, residues 223–302 (TSSIEGTRYS…SSKKGRLLPN (80 aa)) are cytoplasmic. The helical transmembrane segment at 303–323 (IICYFKAVFISQLFLAFVSSF) threads the bilayer. The 311-residue stretch at 311–621 (FISQLFLAFV…IASTVSLLIQ (311 aa)) folds into the ABC transmembrane type-1 1 domain. Residues 324 to 351 (LNFVPSLLMPRILSYVNDPKSQSWNLVS) lie on the Extracellular side of the membrane. Residues 352–374 (LYVSSMLVSKIIATTCRGQGLFL) traverse the membrane as a helical segment. Over 375–449 (GEKGTMQLRT…VMSIDAFKVS (75 aa)) the chain is Cytoplasmic. The segment at 410–434 (NASTSFEENPDSSEAEPRKKSSRKD) is disordered. The span at 424 to 434 (AEPRKKSSRKD) shows a compositional bias: basic and acidic residues. Residues 450–470 (EAMNTFYLACEAVFMTVTALM) traverse the membrane as a helical segment. The Extracellular segment spans residues 471–481 (ILYSLLGWSAF). A helical transmembrane segment spans residues 482 to 504 (AGTFALLAMIPLNFWCATFYGNY). The Cytoplasmic segment spans residues 505–558 (QADQLILTDKRTSGISEALNSIRVIKLLAWENLFYQKIINVRDGEIRLLKKKAT). A helical membrane pass occupies residues 559 to 579 (IFFLNHLIWFFGPTLVSAITF). Residues 580 to 584 (SVFIK) are Extracellular-facing. Residues 585–605 (FQNQTLTPTIAFTALSLFAIL) form a helical membrane-spanning segment. Topologically, residues 606–953 (RTPMDQIAST…KFSAYKWLAD (348 aa)) are cytoplasmic. The region spanning 651–892 (FGFEDASMEW…NEFLRESINN (242 aa)) is the ABC transporter 1 domain. 686-693 (GPTGSGKS) is a binding site for ATP. Over residues 892 to 901 (NDSKNTTHNQ) the composition is skewed to polar residues. The segment at 892-926 (NDSKNTTHNQIDLKRSTTSKKTKNGDPEGENSQDE) is disordered. Residues 954–974 (YFGGLGVVFVFTSSAILIHGI) traverse the membrane as a helical segment. An ABC transmembrane type-1 2 domain is found at 961–1251 (VFVFTSSAIL…IIKVFSSVEL (291 aa)). Residues 975 to 1013 (TLSQGFWLRYWLETGSSGSKSTWLYRIVEGHSNIYFILT) lie on the Extracellular side of the membrane. Residues 1014–1034 (YIVIGFVSSFLTSGKVWIAII) form a helical membrane-spanning segment. Topologically, residues 1035 to 1082 (SGTNVTKKIFAKLLSSILYAKLRFHNVTPTGRIMNRFSKDMDIIDQQL) are cytoplasmic. Residues 1083-1105 (IPNFEGLSYSVVVCLWIILLIGY) form a helical membrane-spanning segment. Residues 1106–1109 (VTPQ) lie on the Extracellular side of the membrane. The helical transmembrane segment at 1110 to 1132 (FLLFAIPLCALYYTVCTLYLRAS) threads the bilayer. Residues 1133–1199 (RELKRIDNIN…ATEWITYRVD (67 aa)) are Cytoplasmic-facing. Residues 1200–1220 (IIGTLVLFSSSVMIIMKASYL) form a helical membrane-spanning segment. The Extracellular portion of the chain corresponds to 1221 to 1222 (DA). The helical transmembrane segment at 1223–1243 (GLAGILLSNAFSFTETAQWII) threads the bilayer. Residues 1244 to 1558 (KVFSSVELLM…LAKVSFDNKR (315 aa)) lie on the Cytoplasmic side of the membrane. One can recognise an ABC transporter 2 domain in the interval 1285-1538 (VELKNLSLRY…RNTIFYRLCR (254 aa)). 1319-1326 (GRTGAGKS) contributes to the ATP binding site.

It belongs to the ABC transporter superfamily. ABCC family. Conjugate transporter (TC 3.A.1.208) subfamily.

The protein resides in the membrane. The chain is ABC transporter NFT1 (NFT1) from Saccharomyces cerevisiae (strain YJM789) (Baker's yeast).